The chain runs to 263 residues: 3-deoxy-manno-octulosonate cytidylyltransferase (263 aa).

It belongs to the KdsB family.

The protein resides in the cytoplasm. The enzyme catalyses 3-deoxy-alpha-D-manno-oct-2-ulosonate + CTP = CMP-3-deoxy-beta-D-manno-octulosonate + diphosphate. The protein operates within nucleotide-sugar biosynthesis; CMP-3-deoxy-D-manno-octulosonate biosynthesis; CMP-3-deoxy-D-manno-octulosonate from 3-deoxy-D-manno-octulosonate and CTP: step 1/1. It participates in bacterial outer membrane biogenesis; lipopolysaccharide biosynthesis. Activates KDO (a required 8-carbon sugar) for incorporation into bacterial lipopolysaccharide in Gram-negative bacteria. The sequence is that of 3-deoxy-manno-octulosonate cytidylyltransferase from Burkholderia mallei (strain NCTC 10229).